The following is a 276-amino-acid chain: 4-hydroxy-tetrahydrodipicolinate reductase (276 aa).

NAD(+) is bound at residue 16–21 (GALGKM). Lys44 contacts NADP(+). NAD(+)-binding positions include 109-111 (GTT) and 135-138 (APNF). Residue His165 is the Proton donor/acceptor of the active site. Position 166 (His166) interacts with (S)-2,3,4,5-tetrahydrodipicolinate. Lys169 serves as the catalytic Proton donor. 175-176 (GT) is a (S)-2,3,4,5-tetrahydrodipicolinate binding site.

This sequence belongs to the DapB family.

The protein localises to the cytoplasm. The catalysed reaction is (S)-2,3,4,5-tetrahydrodipicolinate + NAD(+) + H2O = (2S,4S)-4-hydroxy-2,3,4,5-tetrahydrodipicolinate + NADH + H(+). The enzyme catalyses (S)-2,3,4,5-tetrahydrodipicolinate + NADP(+) + H2O = (2S,4S)-4-hydroxy-2,3,4,5-tetrahydrodipicolinate + NADPH + H(+). It functions in the pathway amino-acid biosynthesis; L-lysine biosynthesis via DAP pathway; (S)-tetrahydrodipicolinate from L-aspartate: step 4/4. Catalyzes the conversion of 4-hydroxy-tetrahydrodipicolinate (HTPA) to tetrahydrodipicolinate. This Thermosynechococcus vestitus (strain NIES-2133 / IAM M-273 / BP-1) protein is 4-hydroxy-tetrahydrodipicolinate reductase.